Here is a 184-residue protein sequence, read N- to C-terminus: NADH-quinone oxidoreductase subunit B (184 aa).

[4Fe-4S] cluster-binding residues include Cys-63, Cys-64, Cys-128, and Cys-158.

Belongs to the complex I 20 kDa subunit family. As to quaternary structure, NDH-1 is composed of 14 different subunits. Subunits NuoB, C, D, E, F, and G constitute the peripheral sector of the complex. The cofactor is [4Fe-4S] cluster.

The protein resides in the cell inner membrane. It catalyses the reaction a quinone + NADH + 5 H(+)(in) = a quinol + NAD(+) + 4 H(+)(out). NDH-1 shuttles electrons from NADH, via FMN and iron-sulfur (Fe-S) centers, to quinones in the respiratory chain. The immediate electron acceptor for the enzyme in this species is believed to be ubiquinone. Couples the redox reaction to proton translocation (for every two electrons transferred, four hydrogen ions are translocated across the cytoplasmic membrane), and thus conserves the redox energy in a proton gradient. This is NADH-quinone oxidoreductase subunit B from Xanthomonas oryzae pv. oryzae (strain MAFF 311018).